A 555-amino-acid chain; its full sequence is Methyl-coenzyme M reductase subunit alpha (555 aa).

Q152 is a binding site for coenzyme F430. Residues R230, 261–262 (KH), and R275 contribute to the coenzyme B site. Residues Y337 and Y448 each coordinate coenzyme M.

This sequence belongs to the methyl-coenzyme M reductase alpha subunit family. MCR is a hexamer of two alpha, two beta, and two gamma chains, forming a dimer of heterotrimers. Coenzyme F430 serves as cofactor.

It is found in the cytoplasm. It carries out the reaction coenzyme B + methyl-coenzyme M = methane + coenzyme M-coenzyme B heterodisulfide. It functions in the pathway one-carbon metabolism; methyl-coenzyme M reduction; methane from methyl-coenzyme M: step 1/1. Its function is as follows. Component of the methyl-coenzyme M reductase (MCR) I that catalyzes the reductive cleavage of methyl-coenzyme M (CoM-S-CH3 or 2-(methylthio)ethanesulfonate) using coenzyme B (CoB or 7-mercaptoheptanoylthreonine phosphate) as reductant which results in the production of methane and the mixed heterodisulfide of CoB and CoM (CoM-S-S-CoB). This is the final step in methanogenesis. The polypeptide is Methyl-coenzyme M reductase subunit alpha (mcrA) (Methanococcus voltae).